Reading from the N-terminus, the 373-residue chain is Outer membrane protein assembly factor BamC (373 aa).

The N-terminal stretch at 1 to 16 is a signal peptide; the sequence is MLKQVTPLVLIAAVTA. Cys17 carries N-palmitoyl cysteine lipidation. The S-diacylglycerol cysteine moiety is linked to residue Cys17.

This sequence belongs to the BamC family. As to quaternary structure, part of the Bam complex.

It localises to the cell outer membrane. In terms of biological role, part of the outer membrane protein assembly complex, which is involved in assembly and insertion of beta-barrel proteins into the outer membrane. The protein is Outer membrane protein assembly factor BamC of Shewanella sediminis (strain HAW-EB3).